The following is a 274-amino-acid chain: Eukaryotic translation initiation factor 3 subunit J (274 aa).

Disordered stretches follow at residues 1-120 and 227-246; these read MSGK…DLKH and EEKAAEKGGKKSKAAKTKTS. A compositionally biased stretch (acidic residues) spans 30-50; that stretch reads DEEGNESDVLDSWDAAEDSEV. The stretch at 46–112 forms a coiled coil; the sequence is EDSEVEREKA…AERRERLRRE (67 aa). Composition is skewed to basic and acidic residues over residues 51–67 and 79–92; these read EREKAKKAAEAKAKAEA and RIAERQAERARQLA. Positions 93 to 102 are enriched in acidic residues; that stretch reads EDSDAEEETE. Positions 103-120 are enriched in basic and acidic residues; the sequence is AERRERLRREQKESDLKH.

The protein belongs to the eIF-3 subunit J family. As to quaternary structure, component of the eukaryotic translation initiation factor 3 (eIF-3) complex.

It is found in the cytoplasm. Its function is as follows. Component of the eukaryotic translation initiation factor 3 (eIF-3) complex, which is involved in protein synthesis of a specialized repertoire of mRNAs and, together with other initiation factors, stimulates binding of mRNA and methionyl-tRNAi to the 40S ribosome. The eIF-3 complex specifically targets and initiates translation of a subset of mRNAs involved in cell proliferation. In Neurospora crassa (strain ATCC 24698 / 74-OR23-1A / CBS 708.71 / DSM 1257 / FGSC 987), this protein is Eukaryotic translation initiation factor 3 subunit J (hcr-1).